The primary structure comprises 118 residues: Small ribosomal subunit protein uS13 (118 aa).

Residues 94–118 (SLPLRGQRTKTNARTRKGPRKAIKK) form a disordered region.

Belongs to the universal ribosomal protein uS13 family. In terms of assembly, part of the 30S ribosomal subunit. Forms a loose heterodimer with protein S19. Forms two bridges to the 50S subunit in the 70S ribosome.

In terms of biological role, located at the top of the head of the 30S subunit, it contacts several helices of the 16S rRNA. In the 70S ribosome it contacts the 23S rRNA (bridge B1a) and protein L5 of the 50S subunit (bridge B1b), connecting the 2 subunits; these bridges are implicated in subunit movement. Contacts the tRNAs in the A and P-sites. In Pseudoalteromonas atlantica (strain T6c / ATCC BAA-1087), this protein is Small ribosomal subunit protein uS13.